The following is a 417-amino-acid chain: D-amino acid dehydrogenase (417 aa).

3-17 (AVVLGSGVVGLMSAW) is a binding site for FAD.

The protein belongs to the DadA oxidoreductase family. FAD is required as a cofactor.

The catalysed reaction is a D-alpha-amino acid + A + H2O = a 2-oxocarboxylate + AH2 + NH4(+). In terms of biological role, oxidative deamination of D-amino acids. This chain is D-amino acid dehydrogenase, found in Vibrio vulnificus (strain YJ016).